A 270-amino-acid polypeptide reads, in one-letter code: uncharacterized protein (270 aa).

Residues 1-37 lie on the Cytoplasmic side of the membrane; it reads MATHTSKRRIHRWENNELSEENSTIIYFPARGLMWTH. Residues 38 to 58 traverse the membrane as a helical segment; that stretch reads FPFVLGICLEFVGYVLKIVFI. Topologically, residues 59–65 are extracellular; the sequence is NSPSIST. A helical membrane pass occupies residues 66-86; it reads FIAQSVLLLIAPSLYALSIFM. Residues 87–93 lie on the Cytoplasmic side of the membrane; sequence LFSKMAR. Residues 94-114 traverse the membrane as a helical segment; it reads LILMEAYMLIPAKFSTVSFVV. At 115–140 the chain is on the extracellular side; sequence ADMIGRVLQAVGGGLLSSWNSRNTGR. Residues 141–161 traverse the membrane as a helical segment; it reads ILIIVGLFIQIFCYTFLTFSQ. The Cytoplasmic segment spans residues 162–181; that stretch reads LFLHYKMKATPSKIVRDSNE. A helical membrane pass occupies residues 182–202; the sequence is WFQYNFILLAGILLVNGRTIV. Residues 203–220 lie on the Extracellular side of the membrane; that stretch reads RVVQFLMGLQSYIGQHEW. A helical transmembrane segment spans residues 221 to 241; it reads CLYVFDTVLMFLLPLIFLATF. Residues 242-270 are Cytoplasmic-facing; that stretch reads RARNLFKLQDKSVNIQLNKLLDKESVSED.

Belongs to the lipid-translocating exporter (LTE) (TC 9.A.26.1) family.

The protein resides in the membrane. This is an uncharacterized protein from Saccharomyces cerevisiae (strain ATCC 204508 / S288c) (Baker's yeast).